The chain runs to 588 residues: Probable G-protein coupled receptor 162 (588 aa).

The Extracellular segment spans residues 1-17 (MARGGLGAEEASLRSNA). A helical membrane pass occupies residues 18-38 (LSWLACGLLALLANAWIILSI). At 39–49 (SAKQQKHKPLE) the chain is on the cytoplasmic side. Residues 50–70 (LLLCFLAGTHILMAAVPLTTF) form a helical membrane-spanning segment. Residues 71 to 91 (AVVQLRRQASSDYDWNESICK) are Extracellular-facing. An N-linked (GlcNAc...) asparagine glycan is attached at Asn-86. The chain crosses the membrane as a helical span at residues 92 to 112 (VFVSTYYTLALATCFTVASLS). The Cytoplasmic portion of the chain corresponds to 113-133 (YHRMWMVRWPVNYRLSNAKKQ). A helical transmembrane segment spans residues 134 to 154 (ALHAVMGIWMVSFILSTLPSI). The Extracellular portion of the chain corresponds to 155–174 (GWHNNGERYYARGCQFIVSK). The chain crosses the membrane as a helical span at residues 175-195 (IGLGFGVCFSLLLLGGIVMGL). Residues 196–275 (VCVAITFYQT…SLQVTNLVSA (80 aa)) are Cytoplasmic-facing. The helical transmembrane segment at 276–296 (IVFLYDSLTGVPILVVSFFSL) threads the bilayer. The Extracellular portion of the chain corresponds to 297–303 (KSDSAPP). The helical transmembrane segment at 304–324 (WMVLAVLWCSMAQTLLLPSFI) threads the bilayer. Over 325 to 588 (WSCERYRADV…GNPIFPQLTL (264 aa)) the chain is Cytoplasmic. Residues Ser-413 and Ser-435 each carry the phosphoserine modification. 2 disordered regions span residues 511–545 (ETPL…SPDS) and 561–588 (SLTG…QLTL). The segment covering 514–525 (LPSPTASPGPSP) has biased composition (pro residues). A compositionally biased stretch (low complexity) spans 530–540 (PLGFSPRRLSL).

The protein belongs to the G-protein coupled receptor 1 family.

It localises to the cell membrane. Functionally, orphan receptor. This chain is Probable G-protein coupled receptor 162 (Gpr162), found in Mus musculus (Mouse).